A 373-amino-acid chain; its full sequence is UDP-N-acetylglucosamine--N-acetylmuramyl-(pentapeptide) pyrophosphoryl-undecaprenol N-acetylglucosamine transferase (373 aa).

UDP-N-acetyl-alpha-D-glucosamine-binding positions include threonine 10–glycine 12, asparagine 124, serine 195, and glutamine 297.

Belongs to the glycosyltransferase 28 family. MurG subfamily.

Its subcellular location is the cell membrane. The enzyme catalyses Mur2Ac(oyl-L-Ala-gamma-D-Glu-L-Lys-D-Ala-D-Ala)-di-trans,octa-cis-undecaprenyl diphosphate + UDP-N-acetyl-alpha-D-glucosamine = beta-D-GlcNAc-(1-&gt;4)-Mur2Ac(oyl-L-Ala-gamma-D-Glu-L-Lys-D-Ala-D-Ala)-di-trans,octa-cis-undecaprenyl diphosphate + UDP + H(+). The protein operates within cell wall biogenesis; peptidoglycan biosynthesis. In terms of biological role, cell wall formation. Catalyzes the transfer of a GlcNAc subunit on undecaprenyl-pyrophosphoryl-MurNAc-pentapeptide (lipid intermediate I) to form undecaprenyl-pyrophosphoryl-MurNAc-(pentapeptide)GlcNAc (lipid intermediate II). In Oenococcus oeni (strain ATCC BAA-331 / PSU-1), this protein is UDP-N-acetylglucosamine--N-acetylmuramyl-(pentapeptide) pyrophosphoryl-undecaprenol N-acetylglucosamine transferase.